Here is a 268-residue protein sequence, read N- to C-terminus: Interleukin-1 alpha (268 aa).

Residues 1–112 constitute a propeptide that is removed on maturation; sequence MAKVPDLFED…DTEEEIIKPR (112 aa). Lysine 82 carries the post-translational modification N6-acetyllysine. The nuclear localization signal (NLS) stretch occupies residues 82 to 86; sequence KKRRL. Position 87 is a phosphoserine (serine 87). Asparagine 102 and asparagine 141 each carry an N-linked (GlcNAc...) asparagine glycan.

The protein belongs to the IL-1 family. As to quaternary structure, monomer. Interacts with TMED10; the interaction mediates the translocation from the cytoplasm into the ERGIC (endoplasmic reticulum-Golgi intermediate compartment) and thereby secretion. Interacts with IL1R1. Interacts with S100A13; this interaction is the first step in the export of IL1A, followed by direct translocation of this complex across the plasma membrane. In terms of processing, acetylated within its nuclear localization sequence, which impacts subcellular localization. Proteolytic processed by CAPN1 in a calcium-dependent manner. Cleavage from 31 kDa precursor to 18 kDa biologically active molecules. Post-translationally, phosphorylated. Phosphorylation greatly enhances susceptibility to digestion and promotes the conversion of pre-IL1A alpha to the biologically active IL1A.

It is found in the nucleus. It localises to the cytoplasm. The protein localises to the secreted. Cytokine constitutively present intracellularly in nearly all resting non-hematopoietic cells that plays an important role in inflammation and bridges the innate and adaptive immune systems. After binding to its receptor IL1R1 together with its accessory protein IL1RAP, forms the high affinity interleukin-1 receptor complex. Signaling involves the recruitment of adapter molecules such as MYD88, IRAK1 or IRAK4. In turn, mediates the activation of NF-kappa-B and the three MAPK pathways p38, p42/p44 and JNK pathways. Within the cell, acts as an alarmin and cell death results in its liberation in the extracellular space after disruption of the cell membrane to induce inflammation and alert the host to injury or damage. In addition to its role as a danger signal, which occurs when the cytokine is passively released by cell necrosis, directly senses DNA damage and acts as signal for genotoxic stress without loss of cell integrity. This is Interleukin-1 alpha (IL1A) from Lama glama (Llama).